We begin with the raw amino-acid sequence, 178 residues long: MIRDILKMGDERLLRIAPPVPEHMLGSAELQQLIDDMFETMRHVGGVGLAAPQVGIDLQLVIFGFERSERYPDAEAVPQTILLNPVITPTSSEVEDGWEGCLSVPGLRGVVPRFKHICYQGIDPQGSPINRFADGFHARVVQHECDHLIGRLYPSRIQDFAKFGYTEVLFPGLEVSED.

Cys101 and His143 together coordinate Fe cation. Glu144 is a catalytic residue. His147 is a binding site for Fe cation.

This sequence belongs to the polypeptide deformylase family. Fe(2+) is required as a cofactor.

The enzyme catalyses N-terminal N-formyl-L-methionyl-[peptide] + H2O = N-terminal L-methionyl-[peptide] + formate. Removes the formyl group from the N-terminal Met of newly synthesized proteins. Requires at least a dipeptide for an efficient rate of reaction. N-terminal L-methionine is a prerequisite for activity but the enzyme has broad specificity at other positions. The chain is Peptide deformylase 2 from Pseudomonas putida (strain ATCC 47054 / DSM 6125 / CFBP 8728 / NCIMB 11950 / KT2440).